The primary structure comprises 200 residues: Biogenesis of lysosome-related organelles complex 1 subunit 3 (200 aa).

Residues 1–11 (MESQSRRRRPL) are compositionally biased toward basic residues. The disordered stretch occupies residues 1-81 (MESQSRRRRP…KAAPRDLPPL (81 aa)). Positions 41-55 (LGPSGPTRGRPTGLR) are enriched in low complexity. Threonine 63 carries the phosphothreonine modification. Serine 65 bears the Phosphoserine mark.

It belongs to the BLOC1S3 family. Component of the biogenesis of lysosome-related organelles complex 1 (BLOC-1) composed of BLOC1S1, BLOC1S2, BLOC1S3, BLOC1S4, BLOC1S5, BLOC1S6, DTNBP1/BLOC1S7 and SNAPIN/BLOC1S8. Octamer composed of one copy each BLOC1S1, BLOC1S2, BLOC1S3, BLOC1S4, BLOC1S5, BLOC1S6, DTNBP1/BLOC1S7 and SNAPIN/BLOC1S8. The BLOC-1 complex associates with the AP-3 protein complex and membrane protein cargos. Interacts directly with BLOC1S2. Interacts with BLOC1S4, BLOC1S5 and BLOC1S6. Phosphorylated.

It is found in the cytoplasm. Functionally, component of the BLOC-1 complex, a complex that is required for normal biogenesis of lysosome-related organelles (LRO), such as platelet dense granules and melanosomes. In concert with the AP-3 complex, the BLOC-1 complex is required to target membrane protein cargos into vesicles assembled at cell bodies for delivery into neurites and nerve terminals. The BLOC-1 complex, in association with SNARE proteins, is also proposed to be involved in neurite extension. Plays a role in intracellular vesicle trafficking. The sequence is that of Biogenesis of lysosome-related organelles complex 1 subunit 3 (BLOC1S3) from Bos taurus (Bovine).